Here is a 371-residue protein sequence, read N- to C-terminus: MEAMAPRTLLLLLAAALAPTQTRAGSHSLRYFYTAVSRPGLGEPRFIAVGYVDDTEFVRFDSDAENPRMEPRARWMEREGPEYWEQQTRIAKEWEQIYRVDLRTLRGYYNQSEGGSHTIQEMYGCDVGSDGSLLRGYRQDAYDGRDYIALNEDLKTWTAADFAAQITRNKWERARYAERLRAYLEGTCVEWLSRYLELGKETLLRSDPPEAHVTLHPRPEGDVTLRCWALGFYPADITLTWQLNGEDLTQDMELVETRPAGDGTFQKWASVVVPLGKEQNYTCRVEHEGLPKPLSQRWEPSPSTDSNMETTVIYVILGAVAMIGAVAIIGAMVAVVRRRKRNTGGKGGDYAPAPGRDSSQSSDVSLPDCKA.

The first 24 residues, methionine 1 to alanine 24, serve as a signal peptide directing secretion. The segment at glycine 25–glycine 114 is alpha-1. The Extracellular portion of the chain corresponds to glycine 25 to threonine 311. Asparagine 110 carries an N-linked (GlcNAc...) asparagine glycan. Residues glycine 115–serine 206 are alpha-2. Positions aspartate 207–tryptophan 298 are alpha-3. In terms of domain architecture, Ig-like C1-type spans proline 209–serine 295. A glycan (N-linked (GlcNAc...) asparagine) is linked at asparagine 280. The interval glutamate 299–threonine 311 is connecting peptide. Residues valine 312–valine 336 traverse the membrane as a helical segment. Residues arginine 337 to alanine 371 are Cytoplasmic-facing. A disordered region spans residues asparagine 342–alanine 371. Phosphoserine occurs at positions 362 and 365.

The protein belongs to the MHC class I family. Heterodimer of an alpha chain and a beta chain (beta-2-microglobulin).

It localises to the membrane. Functionally, involved in the presentation of foreign antigens to the immune system. The sequence is that of RT1 class I histocompatibility antigen, AA alpha chain from Rattus norvegicus (Rat).